We begin with the raw amino-acid sequence, 298 residues long: Protein FAM221A (298 aa).

The span at 241–257 (SSPETLTDVGTSSQVSS) shows a compositional bias: polar residues. A disordered region spans residues 241–263 (SSPETLTDVGTSSQVSSLRRPEE).

The protein belongs to the FAM221 family.

In Homo sapiens (Human), this protein is Protein FAM221A (FAM221A).